The sequence spans 274 residues: uncharacterized protein (274 aa).

The protein localises to the plastid. It is found in the chloroplast. This is an uncharacterized protein from Euglena gracilis.